Reading from the N-terminus, the 174-residue chain is Calcineurin subunit B (174 aa).

4 EF-hand domains span residues 21–56 (EEIE…ASNP), 60–88 (RLFS…FSVH), 90–125 (NKEE…MVGT), and 131–166 (QLQQ…SNVT). Ca(2+)-binding residues include Asp-34, Asn-36, Ser-38, Ser-40, Glu-45, Asp-66, Asp-68, Asp-72, Glu-77, Asp-103, Asp-105, Asp-107, Tyr-109, Glu-114, Asp-144, Asp-146, Asp-148, Lys-150, and Glu-155.

The protein belongs to the calcineurin regulatory subunit family. As to quaternary structure, composed of a catalytic subunit (A) and a regulatory subunit (B).

Regulatory subunit of calcineurin, a calcium-dependent, calmodulin stimulated protein phosphatase. Confers calcium sensitivity. This chain is Calcineurin subunit B (cnb1), found in Schizosaccharomyces pombe (strain 972 / ATCC 24843) (Fission yeast).